A 663-amino-acid polypeptide reads, in one-letter code: UvrABC system protein B (663 aa).

In terms of domain architecture, Helicase ATP-binding spans 27–414; sequence KNIENGVKDQ…SDNHIAEQLI (388 aa). 40–47 provides a ligand contact to ATP; it reads GVTGSGKT. A Beta-hairpin motif is present at residues 93–116; sequence YYDYYQPEAYIKTTDTYIEKDSSV. In terms of domain architecture, Helicase C-terminal spans 432 to 594; sequence QVDDLLDEIR…IDPKSIIKEI (163 aa). The UVR domain occupies 624-659; the sequence is EKEITKLEKKIKKLVEELDFEQAIILRDEMLKLKEL.

The protein belongs to the UvrB family. In terms of assembly, forms a heterotetramer with UvrA during the search for lesions. Interacts with UvrC in an incision complex.

The protein resides in the cytoplasm. Functionally, the UvrABC repair system catalyzes the recognition and processing of DNA lesions. A damage recognition complex composed of 2 UvrA and 2 UvrB subunits scans DNA for abnormalities. Upon binding of the UvrA(2)B(2) complex to a putative damaged site, the DNA wraps around one UvrB monomer. DNA wrap is dependent on ATP binding by UvrB and probably causes local melting of the DNA helix, facilitating insertion of UvrB beta-hairpin between the DNA strands. Then UvrB probes one DNA strand for the presence of a lesion. If a lesion is found the UvrA subunits dissociate and the UvrB-DNA preincision complex is formed. This complex is subsequently bound by UvrC and the second UvrB is released. If no lesion is found, the DNA wraps around the other UvrB subunit that will check the other stand for damage. The polypeptide is UvrABC system protein B (Fusobacterium nucleatum subsp. nucleatum (strain ATCC 25586 / DSM 15643 / BCRC 10681 / CIP 101130 / JCM 8532 / KCTC 2640 / LMG 13131 / VPI 4355)).